A 281-amino-acid chain; its full sequence is NADPH-dependent 7-cyano-7-deazaguanine reductase (281 aa).

87 to 89 is a binding site for substrate; that stretch reads IES. An NADPH-binding site is contributed by 89–90; it reads SK. Cysteine 188 functions as the Thioimide intermediate in the catalytic mechanism. Aspartate 195 functions as the Proton donor in the catalytic mechanism. 227–228 contacts substrate; that stretch reads HE. NADPH is bound at residue 256-257; sequence RG. Positions 261–281 are disordered; that stretch reads INPYRSTEQDKPAHNHRMARQ.

This sequence belongs to the GTP cyclohydrolase I family. QueF type 2 subfamily. As to quaternary structure, homodimer.

The protein resides in the cytoplasm. It catalyses the reaction 7-aminomethyl-7-carbaguanine + 2 NADP(+) = 7-cyano-7-deazaguanine + 2 NADPH + 3 H(+). It functions in the pathway tRNA modification; tRNA-queuosine biosynthesis. Its function is as follows. Catalyzes the NADPH-dependent reduction of 7-cyano-7-deazaguanine (preQ0) to 7-aminomethyl-7-deazaguanine (preQ1). The protein is NADPH-dependent 7-cyano-7-deazaguanine reductase of Vibrio parahaemolyticus serotype O3:K6 (strain RIMD 2210633).